Reading from the N-terminus, the 817-residue chain is Neurabin-2 (817 aa).

Actin-binding regions lie at residues 1–154 (MMKT…FERS) and 164–283 (EAAA…QHRV). A disordered region spans residues 1 to 165 (MMKTEPRGPG…PAAAGGDKEA (165 aa)). 2 positions are modified to phosphoserine: serine 15 and serine 17. Over residues 44–58 (GAHHKKYGSNVHRIK) the composition is skewed to basic residues. A phosphoserine mark is found at serine 94, serine 100, and serine 116. The interval 100–371 (SLNENVDHSA…PERGVGNGRA (272 aa)) is interaction with D(2) dopamine receptor. Residues 131–141 (SAQPAPPPHPP) show a composition bias toward pro residues. The segment at 169 to 255 (RLLRQERAGL…KRSRVFQPPP (87 aa)) is interaction with ADRA2A, ADRA2B and ADRA2C. Serine 192 carries the post-translational modification Phosphoserine. At threonine 193 the chain carries Phosphothreonine. Serine 205 bears the Phosphoserine mark. Threonine 207 bears the Phosphothreonine mark. The tract at residues 216–447 (EKADSRTGLH…SEEEDPAPSR (232 aa)) is disordered. Residues 252–261 (QPPPPPPPAP) are compositionally biased toward pro residues. The segment covering 291–302 (KPREVRKIKPVE) has biased composition (basic and acidic residues). Positions 333-342 (STVATAASPA) are enriched in low complexity. The segment covering 344 to 356 (EEPKAQAAPEKEA) has biased composition (basic and acidic residues). Residues 410–425 (LEEDDEDDEEDGEPPY) show a composition bias toward acidic residues. The tract at residues 417 to 494 (DEEDGEPPYE…LEKRVERLEL (78 aa)) is interaction with protein phosphatase 1. Residue serine 438 is modified to Phosphoserine. Positions 447 to 451 (RKIHF) match the PP1-binding motif motif. An interaction with RGS2 region spans residues 480-525 (SAEYELEKRVERLELFPVELEKDSEGLGISIIGMGAGADMGLEKLG). The 89-residue stretch at 496–584 (PVELEKDSEG…RVRFMIGRER (89 aa)) folds into the PDZ domain. Positions 595–816 (IQQTLEQERW…NLQTLRNSNS (222 aa)) are interaction with TGN38. A Phosphoserine modification is found at serine 658. Positions 671 to 788 (FKELQIKHAV…QRRVLEESEL (118 aa)) form a coiled coil.

Interacts with DCLK2. Possibly exists as a homodimer, homotrimer or a homotetramer. Interacts with F-actin, PPP1CA, neurabin-1, TGN38 and D(2) dopamine receptor. Interacts with RGS1, RGS2, RGS4, RGS19 and ADRA1B, ADRA2A, ADRA2B, ADRA2C, CDKN2A, PPP1R2, RASGFR1 and TIAM1. Interacts (via C-terminus) with SPATA13 (via C-terminal tail). Interacts with ADRA2B. Post-translationally, stimulation of D1 (but not D2) dopamine receptors induces Ser-94 phosphorylation. Dephosphorylation of Ser-94 is mediated mainly by PP1 and to a lesser extent by PP2A. Phosphorylation of spinophilin disrupts its association with F-actin, but does not affect its binding to PP1.

It localises to the cytoplasm. It is found in the cytoskeleton. The protein resides in the nucleus. Its subcellular location is the cell projection. The protein localises to the dendritic spine. It localises to the postsynaptic density. It is found in the synapse. The protein resides in the cell junction. Its subcellular location is the adherens junction. The protein localises to the cell membrane. It localises to the lamellipodium. It is found in the filopodium. The protein resides in the ruffle membrane. Its function is as follows. Seems to act as a scaffold protein in multiple signaling pathways. Modulates excitatory synaptic transmission and dendritic spine morphology. Binds to actin filaments (F-actin) and shows cross-linking activity. Binds along the sides of the F-actin. May play an important role in linking the actin cytoskeleton to the plasma membrane at the synaptic junction. Believed to target protein phosphatase 1/PP1 to dendritic spines, which are rich in F-actin, and regulates its specificity toward ion channels and other substrates, such as AMPA-type and NMDA-type glutamate receptors. Plays a role in regulation of G-protein coupled receptor signaling, including dopamine D2 receptors and alpha-adrenergic receptors. May establish a signaling complex for dopaminergic neurotransmission through D2 receptors by linking receptors downstream signaling molecules and the actin cytoskeleton. Binds to ADRA1B and RGS2 and mediates regulation of ADRA1B signaling. May confer to Rac signaling specificity by binding to both, RacGEFs and Rac effector proteins. Probably regulates p70 S6 kinase activity by forming a complex with TIAM1. Required for hepatocyte growth factor (HGF)-induced cell migration. The sequence is that of Neurabin-2 (PPP1R9B) from Homo sapiens (Human).